Reading from the N-terminus, the 278-residue chain is MINSKTKLVGLIGHPVDHSFSPIMHNAAIKDLKINYRYFAFDVSEENLKDVVAGAKAFNFRGFNITIPHKMNIMKYLDEIDCDAEAIGAVNTVKIENGKAIGYNTDGIGVKKALEEKTGILINKNILIIGSGGASRAVSFELAKDNNLTIVNRNIEKAENLSKEISRKLKKENPLNYGGLDINIENFDIIINTTPVGMYPHTEVEPVIPLNNIKKDAVVMDLIYNPLEPVFLKEAKKYGAKTINGIGMLVYQGAVSFEIWTGIKPDIFVMKKSIISKI.

Residues 19 to 21 (SFS) and Thr66 each bind shikimate. Lys70 (proton acceptor) is an active-site residue. Shikimate contacts are provided by Asn91 and Asp106. Residues 130-134 (GSGGA) and Leu222 contribute to the NADP(+) site. Residue Tyr224 coordinates shikimate. Gly245 is a binding site for NADP(+).

This sequence belongs to the shikimate dehydrogenase family. Homodimer.

The enzyme catalyses shikimate + NADP(+) = 3-dehydroshikimate + NADPH + H(+). It functions in the pathway metabolic intermediate biosynthesis; chorismate biosynthesis; chorismate from D-erythrose 4-phosphate and phosphoenolpyruvate: step 4/7. Functionally, involved in the biosynthesis of the chorismate, which leads to the biosynthesis of aromatic amino acids. Catalyzes the reversible NADPH linked reduction of 3-dehydroshikimate (DHSA) to yield shikimate (SA). In Methanococcus maripaludis (strain DSM 14266 / JCM 13030 / NBRC 101832 / S2 / LL), this protein is Shikimate dehydrogenase (NADP(+)).